The chain runs to 216 residues: Phosphoenolpyruvate guanylyltransferase (216 aa).

Residues Thr143, Gly159, and Ser162 each contribute to the phosphoenolpyruvate site.

This sequence belongs to the CofC family.

The enzyme catalyses phosphoenolpyruvate + GTP + H(+) = enolpyruvoyl-2-diphospho-5'-guanosine + diphosphate. It functions in the pathway cofactor biosynthesis; coenzyme F420 biosynthesis. Its function is as follows. Guanylyltransferase that catalyzes the activation of phosphoenolpyruvate (PEP) as enolpyruvoyl-2-diphospho-5'-guanosine, via the condensation of PEP with GTP. It is involved in the biosynthesis of coenzyme F420, a hydride carrier cofactor. The polypeptide is Phosphoenolpyruvate guanylyltransferase (Streptomyces scabiei (strain 87.22)).